The primary structure comprises 850 residues: Protein monoglycylase TTLL8 (850 aa).

Disordered regions lie at residues 1 to 29 (MEPE…QGIS) and 228 to 254 (RSSR…DAEN). In terms of domain architecture, TTL spans 222–580 (SHQSCSRSSR…DRSCDIGNFE (359 aa)). Residues Lys-354, 360 to 361 (RG), 392 to 395 (QKYI), 405 to 407 (KFD), and 449 to 450 (CN) each bind ATP. Residue Arg-360 coordinates a protein. Asp-527, Glu-540, and Asn-542 together coordinate Mg(2+). Glu-540 lines the ATP pocket. Residues 627 to 652 (AQPLKARGPSAMPDPAQGPPSPALQR) are disordered.

Mg(2+) serves as cofactor.

It localises to the cytoplasm. The protein localises to the cytoskeleton. It is found in the cell projection. Its subcellular location is the cilium. The protein resides in the cilium axoneme. It localises to the flagellum axoneme. The enzyme catalyses L-glutamyl-[protein] + glycine + ATP = glycyl-L-glutamyl-[protein] + ADP + phosphate + H(+). In terms of biological role, monoglycylase which modifies both tubulin and non-tubulin proteins, adding a single glycine to the gamma-carboxyl groups of specific glutamate residues to generate monoglycine side chains within the C-terminal tail of target proteins. Not involved in elongation step of the polyglycylation reaction. Preferentially monoglycylates alpha-tubulin over beta-tubulin. Together with TTLL3, mediates microtubule glycylation of primary and motile cilia, which is essential for their stability and maintenance. Together with TTLL3, glycylates sperm flagella which regulates axonemal dynein motor activity, thereby controlling flagellar beat, directional sperm swimming and male fertility. Monoglycylates non-tubulin proteins such as ANP32A, ANP32B, SET, NCL and NAP1. This Homo sapiens (Human) protein is Protein monoglycylase TTLL8.